Here is a 255-residue protein sequence, read N- to C-terminus: uncharacterized protein (255 aa).

A signal peptide spans 1 to 23 (MKRLNKLVLGIIFLFLVISITAG). Cysteine 24 carries N-palmitoyl cysteine lipidation. The S-diacylglycerol cysteine moiety is linked to residue cysteine 24.

The protein belongs to the staphylococcal tandem lipoprotein family.

It localises to the cell membrane. This is an uncharacterized protein from Staphylococcus aureus (strain USA300).